The chain runs to 406 residues: Cysteine desulfurase (406 aa).

N6-(pyridoxal phosphate)lysine is present on K226. The active-site Cysteine persulfide intermediate is the C364.

Belongs to the class-V pyridoxal-phosphate-dependent aminotransferase family. Csd subfamily. As to quaternary structure, homodimer. Interacts with SufE and the SufBCD complex composed of SufB, SufC and SufD. The interaction with SufE is required to mediate the direct transfer of the sulfur atom from the S-sulfanylcysteine. Pyridoxal 5'-phosphate serves as cofactor.

The protein resides in the cytoplasm. The enzyme catalyses (sulfur carrier)-H + L-cysteine = (sulfur carrier)-SH + L-alanine. The catalysed reaction is L-selenocysteine + AH2 = hydrogenselenide + L-alanine + A + H(+). Its pathway is cofactor biosynthesis; iron-sulfur cluster biosynthesis. In terms of biological role, cysteine desulfurases mobilize the sulfur from L-cysteine to yield L-alanine, an essential step in sulfur metabolism for biosynthesis of a variety of sulfur-containing biomolecules. Component of the suf operon, which is activated and required under specific conditions such as oxidative stress and iron limitation. Acts as a potent selenocysteine lyase in vitro, that mobilizes selenium from L-selenocysteine. Selenocysteine lyase activity is however unsure in vivo. This chain is Cysteine desulfurase, found in Klebsiella pneumoniae subsp. pneumoniae (strain ATCC 700721 / MGH 78578).